The following is a 61-amino-acid chain: Large ribosomal subunit protein uL30 (61 aa).

The protein belongs to the universal ribosomal protein uL30 family. As to quaternary structure, part of the 50S ribosomal subunit.

The polypeptide is Large ribosomal subunit protein uL30 (Chlorobium phaeovibrioides (strain DSM 265 / 1930) (Prosthecochloris vibrioformis (strain DSM 265))).